We begin with the raw amino-acid sequence, 648 residues long: Nucleoside triphosphatase I (648 aa).

A Helicase ATP-binding domain is found at 48–212 (FIGLKNLNSM…NNLIGLLRPN (165 aa)). 61 to 68 (WDTGMGKT) lines the ATP pocket. The short motif at 150-153 (DEVH) is the DEXH box element. Positions 378-541 (YIETCKIILN…KINVIFDLLK (164 aa)) constitute a Helicase C-terminal domain. Positions 467–533 (DIIILDMPWN…DIIKDKQGKI (67 aa)) are binding to the cap-specific mRNA (nucleoside-2'-O-)-methyltransferase.

Belongs to the helicase family. NPH I subfamily. Monomer. Interacts (via C-terminus) with RAP94 (via N-terminus). Interacts with the cap-specific mRNA (nucleoside-2'-O-)-methyltransferase.

It is found in the virion. It catalyses the reaction a ribonucleoside 5'-triphosphate + H2O = a ribonucleoside 5'-diphosphate + phosphate + H(+). In terms of biological role, DNA-dependent ATPase required for providing the needed energy to achieve the termination of early transcripts. Acts in concert with the RAP94 subunit of the virion RNA polymerase and the capping enzyme/VTF to catalyze release of UUUUUNU-containing nascent RNA from the elongation complex. NPH-I must bind ssDNA in order to exhibit ATPase activity. The polypeptide is Nucleoside triphosphatase I (NPH1) (Amsacta (AmEPV)).